The following is a 58-amino-acid chain: Bestoxin (58 aa).

In terms of domain architecture, LCN-type CS-alpha/beta spans 3–58 (VPGNYPLDKDGNTYTCLELGENKDCQKVCKLHGVQYGYCYAFSCWCKEYLDDKDSV). Intrachain disulfides connect C18–C41, C27–C46, and C31–C48.

In terms of tissue distribution, expressed by the venom gland.

It localises to the secreted. In terms of biological role, beta toxins bind voltage-independently at site-4 of sodium channels (Nav) and shift the voltage of activation toward more negative potentials thereby affecting sodium channel activation and promoting spontaneous and repetitive firing. In mice, causes intense writhing. This is Bestoxin from Parabuthus transvaalicus (Transvaal thick-tailed scorpion).